The chain runs to 582 residues: MSESWQQPPQTQPQQPQPPQPQHHAEPPPALAEHTLPPGTAENPLGCAVYGILLQPDPGLQPPQHAPLQAAGEPGPKCGVCGHDLAHLSSPHEHQCLAGHDRSFQCTQCLKIFHQATDLLEHQCVQAEQKPFVCGVCKMGFSLLTSLAQHHSSHSGLVKCSICEKTYKPAEAAEPATTAAPSLPAAPAPSTVTPAEQADKPYSCPICQKPFKHLSELSRHERIHTGEKPYKCTLCDKSFSQSSHLVHHKRTHSSERPYKCAVCEKTFKHRSHLVRHMYAHSGEHHLFRCNVCELHFKESSELLQHPCTPSGERPFRCGECQKAFKRPSDLRQHERTHSAERPFKCDLCPMGFKQQYALMRHRRTHKTEEPFKCGLCEKGFGQPSHLLYHQHVHTLETLFKCPVCQKGFDQSAELLRHKCLPGAAERPFKCPVCNKAYKRASALQKHQLAHCAAAEKPLRCTLCERRFFSSSEFVQHRCDPAREKPLKCPDCEKRFKYASDLQRHRRVHTGEKPYKCPNCDKAFKQREHLNKHQGVHAREQQFKCVWCGERFLDVALLQEHSAQHSAAAAAAEGAYQVAACLP.

Over residues 1–14 the composition is skewed to low complexity; sequence MSESWQQPPQTQPQ. The tract at residues 1-39 is disordered; that stretch reads MSESWQQPPQTQPQQPQPPQPQHHAEPPPALAEHTLPPG. Residues 76-100 form a C2H2-type 1 zinc finger; the sequence is PKCGVCGHDLAHLSSPHEHQCLAGH. The C2H2-type 2; degenerate zinc finger occupies 104–126; the sequence is FQCTQCLKIFHQATDLLEHQCVQ. K130 participates in a covalent cross-link: Glycyl lysine isopeptide (Lys-Gly) (interchain with G-Cter in SUMO2). The segment at 132-154 adopts a C2H2-type 3 zinc-finger fold; the sequence is FVCGVCKMGFSLLTSLAQHHSSH. Positions 174-196 are enriched in low complexity; that stretch reads EPATTAAPSLPAAPAPSTVTPAE. The interval 174–198 is disordered; that stretch reads EPATTAAPSLPAAPAPSTVTPAEQA. 3 consecutive C2H2-type zinc fingers follow at residues 202–224, 230–252, and 258–280; these read YSCPICQKPFKHLSELSRHERIH, YKCTLCDKSFSQSSHLVHHKRTH, and YKCAVCEKTFKHRSHLVRHMYAH. S281 is subject to Phosphoserine. The C2H2-type 7; degenerate zinc-finger motif lies at 287-309; the sequence is FRCNVCELHFKESSELLQHPCTP. C2H2-type zinc fingers lie at residues 315–337, 343–365, and 371–393; these read FRCGECQKAFKRPSDLRQHERTH, FKCDLCPMGFKQQYALMRHRRTH, and FKCGLCEKGFGQPSHLLYHQHVH. The segment at 399–421 adopts a C2H2-type 11; degenerate zinc-finger fold; that stretch reads FKCPVCQKGFDQSAELLRHKCLP. Residues 428–450 form a C2H2-type 12 zinc finger; it reads FKCPVCNKAYKRASALQKHQLAH. The C2H2-type 13; degenerate zinc finger occupies 458–480; the sequence is LRCTLCERRFFSSSEFVQHRCDP. 3 consecutive C2H2-type zinc fingers follow at residues 486-508, 514-536, and 542-564; these read LKCPDCEKRFKYASDLQRHRRVH, YKCPNCDKAFKQREHLNKHQGVH, and FKCVWCGERFLDVALLQEHSAQH.

It belongs to the krueppel C2H2-type zinc-finger protein family.

It localises to the nucleus. In terms of biological role, may be involved in transcriptional regulation. This Homo sapiens (Human) protein is Zinc finger protein 319 (ZNF319).